The primary structure comprises 360 residues: Ribosomal RNA large subunit methyltransferase F (360 aa).

The tract at residues 1-36 (MSKLISKQGKRPALSQSGLAKPSTSKKSSASKNANT) is disordered. Positions 23–36 (STSKKSSASKNANT) are enriched in low complexity.

It belongs to the methyltransferase superfamily. METTL16/RlmF family.

It is found in the cytoplasm. It carries out the reaction adenosine(1618) in 23S rRNA + S-adenosyl-L-methionine = N(6)-methyladenosine(1618) in 23S rRNA + S-adenosyl-L-homocysteine + H(+). Specifically methylates the adenine in position 1618 of 23S rRNA. The polypeptide is Ribosomal RNA large subunit methyltransferase F (Shewanella denitrificans (strain OS217 / ATCC BAA-1090 / DSM 15013)).